We begin with the raw amino-acid sequence, 276 residues long: Diaminopimelate epimerase (276 aa).

Residues Asn13, Gln46, and Asn66 each contribute to the substrate site. The active-site Proton donor is Cys75. Residues 76 to 77 (GN), Asn159, Asn192, and 210 to 211 (ER) each bind substrate. The active-site Proton acceptor is Cys219. 220–221 (GT) is a substrate binding site.

It belongs to the diaminopimelate epimerase family. In terms of assembly, homodimer.

It is found in the cytoplasm. The catalysed reaction is (2S,6S)-2,6-diaminopimelate = meso-2,6-diaminopimelate. The protein operates within amino-acid biosynthesis; L-lysine biosynthesis via DAP pathway; DL-2,6-diaminopimelate from LL-2,6-diaminopimelate: step 1/1. Functionally, catalyzes the stereoinversion of LL-2,6-diaminopimelate (L,L-DAP) to meso-diaminopimelate (meso-DAP), a precursor of L-lysine and an essential component of the bacterial peptidoglycan. This Pseudomonas aeruginosa (strain LESB58) protein is Diaminopimelate epimerase.